The sequence spans 819 residues: Probable cadmium/zinc-transporting ATPase HMA1, chloroplastic (819 aa).

The N-terminal 17 residues, 1-17 (MEPATLTRSSSLTRFPY), are a transit peptide targeting the chloroplast. At 18–122 (RRGLSTLRLA…IGWVRLANYL (105 aa)) the chain is on the stromal side. Basic and acidic residues predominate over residues 66–79 (DHHHDHHHDDEQDH). The interval 66–87 (DHHHDHHHDDEQDHHNHHHHHH) is disordered. Residues 123-144 (REHLHLCCSAAAMFLAAAVCPY) traverse the membrane as a helical segment. At 145–153 (LAPEPYIKS) the chain is on the lumenal side. The chain crosses the membrane as a helical span at residues 154-173 (LQNAFMIVGFPLVGVSASLD). Topologically, residues 174-180 (ALMDIAG) are stromal. Residues 181-201 (GKVNIHVLMALAAFASVFMGN) traverse the membrane as a helical segment. Residue Ala202 is a topological domain, lumenal. Residues 203-223 (LEGGLLLAMFNLAHIAEEFFT) form a helical membrane-spanning segment. Over 224–361 (SRSMVDVKEL…KPKLQRWLDE (138 aa)) the chain is Stromal. Residues 362-384 (FGENYSKVVVVLSLAIAFLGPFL) traverse the membrane as a helical segment. The Lumenal portion of the chain corresponds to 385-398 (FKWPFLSTAACRGS). Residues 399–416 (VYRALGLMVAASPCALAV) traverse the membrane as a helical segment. At 417–737 (APLAYATAIS…AKSRQTTSLV (321 aa)) the chain is on the stromal side. Asp453 functions as the 4-aspartylphosphate intermediate in the catalytic mechanism. The Mg(2+) site is built by Glu682 and Asp686. The chain crosses the membrane as a helical span at residues 738–757 (KQNVALALTSIFLAALPSVL). The Lumenal segment spans residues 758–762 (GFVPL). The helical transmembrane segment at 763–781 (WLTVLLHEGGTLLVCLNSV) threads the bilayer. The Stromal portion of the chain corresponds to 782-819 (RGLNDPSWSWKQDIVHLINKLRSQEPTSSSSNSLSSAH).

It belongs to the cation transport ATPase (P-type) (TC 3.A.3) family. Type IB subfamily.

Its subcellular location is the plastid. The protein localises to the chloroplast inner membrane. It catalyses the reaction Zn(2+)(in) + ATP + H2O = Zn(2+)(out) + ADP + phosphate + H(+). The catalysed reaction is Cd(2+)(in) + ATP + H2O = Cd(2+)(out) + ADP + phosphate + H(+). In terms of biological role, involved in cadmium/zinc transport. In Arabidopsis thaliana (Mouse-ear cress), this protein is Probable cadmium/zinc-transporting ATPase HMA1, chloroplastic (HMA1).